Here is a 156-residue protein sequence, read N- to C-terminus: Endoribonuclease YbeY (156 aa).

Zn(2+) contacts are provided by H122, H126, and H132.

This sequence belongs to the endoribonuclease YbeY family. Requires Zn(2+) as cofactor.

The protein resides in the cytoplasm. Functionally, single strand-specific metallo-endoribonuclease involved in late-stage 70S ribosome quality control and in maturation of the 3' terminus of the 16S rRNA. This is Endoribonuclease YbeY from Moorella thermoacetica (strain ATCC 39073 / JCM 9320).